Reading from the N-terminus, the 94-residue chain is Large ribosomal subunit protein eL43B (94 aa).

The C4-type zinc finger occupies 39–62 (CPFCGRLTVKRTAAGIWKCSGKGC).

It belongs to the eukaryotic ribosomal protein eL43 family. In terms of assembly, component of the large ribosomal subunit (LSU). Mature yeast ribosomes consist of a small (40S) and a large (60S) subunit. The 40S small subunit contains 1 molecule of ribosomal RNA (18S rRNA) and at least 33 different proteins. The large 60S subunit contains 3 rRNA molecules (25S, 5.8S and 5S rRNA) and at least 46 different proteins.

It localises to the cytoplasm. Its function is as follows. Component of the ribosome, a large ribonucleoprotein complex responsible for the synthesis of proteins in the cell. The small ribosomal subunit (SSU) binds messenger RNAs (mRNAs) and translates the encoded message by selecting cognate aminoacyl-transfer RNA (tRNA) molecules. The large subunit (LSU) contains the ribosomal catalytic site termed the peptidyl transferase center (PTC), which catalyzes the formation of peptide bonds, thereby polymerizing the amino acids delivered by tRNAs into a polypeptide chain. The nascent polypeptides leave the ribosome through a tunnel in the LSU and interact with protein factors that function in enzymatic processing, targeting, and the membrane insertion of nascent chains at the exit of the ribosomal tunnel. This Schizosaccharomyces pombe (strain 972 / ATCC 24843) (Fission yeast) protein is Large ribosomal subunit protein eL43B (rpl4302).